Consider the following 1388-residue polypeptide: Rho-associated protein kinase 2 (1388 aa).

Residues 1-24 are disordered; that stretch reads MSRPPPTGKMPGAPEAAAGDGAGA. The Protein kinase domain maps to 92–354; it reads YDVVKVIGRG…VEEIKSASFF (263 aa). Residues 98-106 and Lys121 each bind ATP; that span reads IGRGAFGEV. The active-site Proton acceptor is Asp214. The region spanning 357 to 425 is the AGC-kinase C-terminal domain; it reads DQWNWDNIRE…FRENLLLSDS (69 aa). The interval 363–784 is interaction with PPP1R12A; that stretch reads NIRETAAPVV…LNELLKQKDV (422 aa). Residues 373–420 are interaction with NPM1; sequence PELSSDIDSSNFDDIEDDKGDVETFPIPKAFVGNQLPFIGFTYFRENL. At Thr414 the chain carries Phosphothreonine; by ROCK2. Coiled coils occupy residues 439–1024 and 1052–1131; these read SEES…EKQL and SDTD…IGMD. Residues 497–573 enclose the REM-1 domain; it reads TLRQLEREKA…LDEANALLRT (77 aa). The span at 513-530 shows a compositional bias: basic and acidic residues; it reads AEYQRKADHEADKKRNLE. The interval 513–532 is disordered; that stretch reads AEYQRKADHEADKKRNLEND. A Phosphotyrosine; by SRC modification is found at Tyr722. In terms of domain architecture, RhoBD spans 979–1047; the sequence is TSDVANLANE…LAEIMNRKEP (69 aa). The interval 979–1047 is RHOA binding; the sequence is TSDVANLANE…LAEIMNRKEP (69 aa). Ser1137 is subject to Phosphoserine. A PH domain is found at 1150–1349; sequence ESRLEGWLSL…WVSRLVKKIP (200 aa). At Thr1212 the chain carries Phosphothreonine. The segment at 1260–1315 adopts a Phorbol-ester/DAG-type zinc-finger fold; the sequence is GHEFIPTLYHFPTNCEACMKPLWHMFKPPPALECSRCHIKCHKDHMDKKEEIIAPC. Residues 1345–1388 form a disordered region; the sequence is VKKIPKKPPAPDPFARSSPRTSMKIQQNQSIRRPSRQLAPNKPS. 2 positions are modified to phosphoserine: Ser1362 and Ser1374. Over residues 1362–1376 the composition is skewed to polar residues; it reads SPRTSMKIQQNQSIR.

The protein belongs to the protein kinase superfamily. AGC Ser/Thr protein kinase family. Homodimer. Interacts with IRS1. Interacts with RAF1. Interacts with RHOA (activated by GTP), RHOB, RHOC. Interacts with PPP1R12A. Interacts with EP300. Interacts with CHORDC1. Interacts with BRCA2. Interacts with NPM1; this interaction enhances its activity. Interacts with SORL1. Interacts with PJVK. Requires Mg(2+) as cofactor. In terms of processing, autophosphorylated. Phosphorylation at Tyr-722 reduces its binding to RHOA and is crucial for focal adhesion dynamics. Dephosphorylation by PTPN11 stimulates its RHOA binding activity. Cleaved by granzyme B during apoptosis. This leads to constitutive activation of the kinase and membrane blebbing. As to expression, highly expressed in brain, lung, liver, skeletal muscle, kidney and testis.

It is found in the cytoplasm. The protein resides in the cell membrane. The protein localises to the nucleus. It localises to the cytoskeleton. Its subcellular location is the microtubule organizing center. It is found in the centrosome. The enzyme catalyses L-seryl-[protein] + ATP = O-phospho-L-seryl-[protein] + ADP + H(+). It carries out the reaction L-threonyl-[protein] + ATP = O-phospho-L-threonyl-[protein] + ADP + H(+). Activated by RHOA binding. Inhibited by Y-27632. In terms of biological role, protein kinase which is a key regulator of actin cytoskeleton and cell polarity. Involved in regulation of smooth muscle contraction, actin cytoskeleton organization, stress fiber and focal adhesion formation, neurite retraction, cell adhesion and motility via phosphorylation of ADD1, BRCA2, CNN1, EZR, DPYSL2, EP300, MSN, MYL9/MLC2, NPM1, RDX, PPP1R12A and VIM. Phosphorylates SORL1 and IRF4. Acts as a negative regulator of VEGF-induced angiogenic endothelial cell activation. Positively regulates the activation of p42/MAPK1-p44/MAPK3 and of p90RSK/RPS6KA1 during myogenic differentiation. Plays an important role in the timely initiation of centrosome duplication. Inhibits keratinocyte terminal differentiation. May regulate closure of the eyelids and ventral body wall through organization of actomyosin bundles. Plays a critical role in the regulation of spine and synaptic properties in the hippocampus. Plays a role in placental homeostasis during the perinatal period. Plays an important role in generating the circadian rhythm of the aortic myofilament Ca(2+) sensitivity and vascular contractility by modulating the myosin light chain phosphorylation. The protein is Rho-associated protein kinase 2 (Rock2) of Rattus norvegicus (Rat).